Reading from the N-terminus, the 398-residue chain is Tryptophan synthase beta chain (398 aa).

An N6-(pyridoxal phosphate)lysine modification is found at Lys-90.

It belongs to the TrpB family. Tetramer of two alpha and two beta chains. It depends on pyridoxal 5'-phosphate as a cofactor.

The catalysed reaction is (1S,2R)-1-C-(indol-3-yl)glycerol 3-phosphate + L-serine = D-glyceraldehyde 3-phosphate + L-tryptophan + H2O. It functions in the pathway amino-acid biosynthesis; L-tryptophan biosynthesis; L-tryptophan from chorismate: step 5/5. Its function is as follows. The beta subunit is responsible for the synthesis of L-tryptophan from indole and L-serine. This chain is Tryptophan synthase beta chain, found in Anoxybacillus flavithermus (strain DSM 21510 / WK1).